Reading from the N-terminus, the 471-residue chain is Glutamate--tRNA ligase 1 (471 aa).

Positions 15–25 (PSPTGYLHIGG) match the 'HIGH' region motif. The 'KMSKS' region signature appears at 243–247 (KLSKR). An ATP-binding site is contributed by Lys-246.

It belongs to the class-I aminoacyl-tRNA synthetase family. Glutamate--tRNA ligase type 1 subfamily. As to quaternary structure, monomer.

The protein localises to the cytoplasm. It carries out the reaction tRNA(Glu) + L-glutamate + ATP = L-glutamyl-tRNA(Glu) + AMP + diphosphate. Catalyzes the attachment of glutamate to tRNA(Glu) in a two-step reaction: glutamate is first activated by ATP to form Glu-AMP and then transferred to the acceptor end of tRNA(Glu). The polypeptide is Glutamate--tRNA ligase 1 (Cereibacter sphaeroides (strain ATCC 17029 / ATH 2.4.9) (Rhodobacter sphaeroides)).